We begin with the raw amino-acid sequence, 242 residues long: Probable transcriptional regulatory protein BamMC406_2210 (242 aa).

This sequence belongs to the TACO1 family.

It is found in the cytoplasm. This is Probable transcriptional regulatory protein BamMC406_2210 from Burkholderia ambifaria (strain MC40-6).